The chain runs to 304 residues: Ribonuclease BN (304 aa).

H63, H65, D67, H68, H140, D211, and H269 together coordinate Zn(2+). The active-site Proton acceptor is D67.

Belongs to the RNase Z family. RNase BN subfamily. In terms of assembly, homodimer. Requires Zn(2+) as cofactor.

Its function is as follows. Zinc phosphodiesterase, which has both exoribonuclease and endoribonuclease activities. This is Ribonuclease BN from Erwinia tasmaniensis (strain DSM 17950 / CFBP 7177 / CIP 109463 / NCPPB 4357 / Et1/99).